A 266-amino-acid chain; its full sequence is Non-structural maintenance of chromosomes element 1 homolog (266 aa).

The segment at 1-102 (MQGSTRRAGA…SVSKMATDFA (102 aa)) is interaction with NSMCE3. The RING-type; atypical zinc-finger motif lies at 191–232 (CNICHGLLIQGQSCETCGIRMHLPCVAKYFQSIPEPHCPHCN). Positions 246-266 (EKEREAGISKSSRKSLRTRQH) are disordered. Residues 256–266 (SSRKSLRTRQH) are compositionally biased toward basic residues.

Belongs to the NSE1 family. Component of the SMC5-SMC6 complex which consists at least of SMC5, SMC6, NSMCE2, NSMCE1, NSMCE4A or EID3 and NSMCE3. NSMCE1, NSMCE4A or EID3 and NSMCE3 probably form a subcomplex that bridges the head domains of the SMC5-SMC6 heterodimer. Interacts with NSMCE3. In terms of processing, ubiquitinated.

The protein localises to the nucleus. The protein resides in the chromosome. It localises to the telomere. It carries out the reaction S-ubiquitinyl-[E2 ubiquitin-conjugating enzyme]-L-cysteine + [acceptor protein]-L-lysine = [E2 ubiquitin-conjugating enzyme]-L-cysteine + N(6)-ubiquitinyl-[acceptor protein]-L-lysine.. RING-type zinc finger-containing E3 ubiquitin ligase that assembles with melanoma antigen protein (MAGE) to catalyze the direct transfer of ubiquitin from E2 ubiquitin-conjugating enzyme to a specific substrate. Within MAGE-RING ubiquitin ligase complex, MAGE stimulates and specifies ubiquitin ligase activity likely through recruitment and/or stabilization of the E2 ubiquitin-conjugating enzyme at the E3:substrate complex. Involved in maintenance of genome integrity, DNA damage response and DNA repair. NSMCE3/MAGEG1 and NSMCE1 ubiquitin ligase are components of SMC5-SMC6 complex and may positively regulate homologous recombination-mediated DNA repair. In Mus musculus (Mouse), this protein is Non-structural maintenance of chromosomes element 1 homolog (Nsmce1).